Here is a 605-residue protein sequence, read N- to C-terminus: Inactive LRR receptor-like serine/threonine-protein kinase BIR2 (605 aa).

The first 28 residues, 1-28, serve as a signal peptide directing secretion; sequence MKEIGSKPRKLLPLCFIIFLCFCSSVMA. At 29-229 the chain is on the extracellular side; the sequence is ADEDDIRCLR…CGGLSKKNLG (201 aa). N-linked (GlcNAc...) asparagine glycosylation occurs at Asn-58. LRR repeat units lie at residues 101–125, 127–150, 152–173, and 174–197; these read CASL…LCNW, PFLV…LAKC, FVNS…QFSA, and LGRL…FFSS. The chain crosses the membrane as a helical span at residues 230 to 250; the sequence is IIIAAGVFGAAASMLLAFGIW. At 251–605 the chain is on the cytoplasmic side; that stretch reads WYYHLKWTRR…IFDTQENEKV (355 aa). Ser-271 is subject to Phosphoserine; by BAK1. Thr-283 bears the Phosphothreonine; by BAK1 mark. Ser-286 is modified (phosphoserine; by BAK1). Residue Thr-304 is modified to Phosphothreonine; by BAK1. One can recognise a Protein kinase domain in the interval 307-578; sequence FNSENIIVST…FQAYQSLKAI (272 aa). 313–321 contributes to the ATP binding site; the sequence is IVSTRTGTT. Ser-330 is modified (phosphoserine; by BAK1). An ATP-binding site is contributed by Lys-335. Phosphoserine; by BAK1 is present on Ser-389. At Thr-402 the chain carries Phosphothreonine. Phosphoserine; by BAK1 occurs at positions 448 and 462. Thr-466 bears the Phosphothreonine; by BAK1 mark. Position 479 is a phosphotyrosine (Tyr-479). At Thr-482 the chain carries Phosphothreonine. Position 486 is a phosphoserine (Ser-486). Thr-533 carries the phosphothreonine; by BAK1 modification.

This sequence belongs to the protein kinase superfamily. Ser/Thr protein kinase family. As to quaternary structure, interacts constitutively with BAK1, when phosphorylated, thereby preventing interaction with the ligand-binding LRR-RLK FLS2. Upon infection, pathogen-associated molecular patterns (PAMP) perception leads to BIR2 release from the BAK1 complex and enables the recruitment of BAK1 into the FLS2 complex. In terms of processing, phosphorylated by BAK1, this interacts promotes interaction with BAK1.

It localises to the cell membrane. Functionally, pseudokinases lacking protein kinase activity and unable to bind ATP-analogs. Negative regulator of pathogen-associated molecular patterns- (PAMP-) triggered immunity by limiting BAK1-receptor complex formation in the absence of ligands. This is Inactive LRR receptor-like serine/threonine-protein kinase BIR2 from Arabidopsis thaliana (Mouse-ear cress).